We begin with the raw amino-acid sequence, 518 residues long: G-protein coupled receptor 161 (518 aa).

Residues 1–26 lie on the Extracellular side of the membrane; that stretch reads MNSSSDGANEGAGAAADNGPTKVAES. Asparagine 2 carries an N-linked (GlcNAc...) asparagine glycan. The helical transmembrane segment at 27–47 threads the bilayer; sequence IAIIIIDILICLGNLVIVVTL. At 48–59 the chain is on the cytoplasmic side; it reads YKKSYLLSLSNK. The helical transmembrane segment at 60–80 threads the bilayer; it reads FVFSLTFSNLLLSMLVLPFVV. Residues 81 to 97 are Extracellular-facing; the sequence is VSSILREWIFGVVWCNF. Residues cysteine 95 and cysteine 173 are joined by a disulfide bond. N-linked (GlcNAc...) asparagine glycosylation is present at asparagine 96. The helical transmembrane segment at 98–118 threads the bilayer; that stretch reads SALLYMLISSASMLTLGIIAI. Topologically, residues 119–138 are cytoplasmic; it reads DRYYAVLYPMVYPMKITGNR. A helical membrane pass occupies residues 139-159; the sequence is AVLALVYVWLHSLIGCLPPLF. Topologically, residues 160-185 are extracellular; the sequence is GWSTLEFDHFKWMCVAAWHKEAGYTA. Residues 186–206 traverse the membrane as a helical segment; that stretch reads FWQVWCALLPFIVMMICYGFI. Residues 207–264 are Cytoplasmic-facing; sequence FRVARIKARKIHCGTVIIVQEASQKNGRKNSSTSTSSSGSRKNGFSSIVYSANQCKAL. A helical transmembrane segment spans residues 265–285; sequence ITILVVIGAFVLTWGPYMIVI. The Extracellular segment spans residues 286 to 301; the sequence is STEALKGKNSVSPVLE. The chain crosses the membrane as a helical span at residues 302-322; sequence TLATWLSFTSAICHPLIYGLW. Residues 323 to 518 are Cytoplasmic-facing; that stretch reads NKTVRKELLG…GNIETSKCDV (196 aa). Residues 429–448 are disordered; it reads EVEQKNDARTMPTQPTAPSE. A compositionally biased stretch (polar residues) spans 439-448; sequence MPTQPTAPSE.

The protein belongs to the G-protein coupled receptor 1 family.

It is found in the cell projection. Its subcellular location is the cilium membrane. It localises to the cell membrane. Key negative regulator of Shh signaling during neural tube development. Recruited to primary cilia and acts as a regulator of the PKA-dependent basal repression machinery in Shh signaling by increasing cAMP levels, leading to promote the PKA-dependent processing of gli3 into gli3r and repress the Shh signaling. In presence of shh, it is removed from primary cilia, preventing its activity and allowing activation of the Shh signaling. This is G-protein coupled receptor 161 (gpr161) from Xenopus tropicalis (Western clawed frog).